Consider the following 421-residue polypeptide: Aspartokinase (421 aa).

Residue 7–10 (KYGG) coordinates ATP. 25 to 30 (RIVATK) serves as a coordination point for substrate. Ser41 is a binding site for ATP. Residues 45–49 (DTTDE), Glu74, 125–126 (LD), 151–154 (RGGS), and Ser154 contribute to the substrate site. ATP-binding positions include 174 to 175 (SD), 180 to 185 (YTADPR), and Lys210. 2 consecutive ACT domains span residues 267–343 (VTVL…YDDQ) and 349–421 (LVGA…GTGR). Substrate contacts are provided by residues Asp274, 274-279 (DKPGEA), 292-294 (NID), Gln298, 360-361 (VT), 374-375 (NI), and 381-382 (SE).

This sequence belongs to the aspartokinase family. In terms of assembly, tetramer consisting of 2 isoforms Alpha (catalytic and regulation) and of a homodimer of 2 isoforms Beta (regulation). The dimerization of the beta isoforms is stabilized by the bonding of threonine.

The catalysed reaction is L-aspartate + ATP = 4-phospho-L-aspartate + ADP. It participates in amino-acid biosynthesis; L-lysine biosynthesis via DAP pathway; (S)-tetrahydrodipicolinate from L-aspartate: step 1/4. The protein operates within amino-acid biosynthesis; L-methionine biosynthesis via de novo pathway; L-homoserine from L-aspartate: step 1/3. Its pathway is amino-acid biosynthesis; L-threonine biosynthesis; L-threonine from L-aspartate: step 1/5. Its activity is regulated as follows. Feedback inhibition by lysine and threonine, but he enzyme is moderately inhibited by lysine alone, and threonine alone has no effect. Catalyzes the phosphorylation of the beta-carboxyl group of aspartic acid with ATP to yield 4-phospho-L-aspartate, which is involved in the branched biosynthetic pathway leading to the biosynthesis of amino acids lysine, threonine, isoleucine and methionine. The chain is Aspartokinase (lysC) from Corynebacterium glutamicum (strain ATCC 13032 / DSM 20300 / JCM 1318 / BCRC 11384 / CCUG 27702 / LMG 3730 / NBRC 12168 / NCIMB 10025 / NRRL B-2784 / 534).